Consider the following 193-residue polypeptide: Pyridoxal 5'-phosphate synthase subunit PdxT (193 aa).

Residue 52 to 54 (GES) participates in L-glutamine binding. The Nucleophile role is filled by Cys84. L-glutamine is bound by residues Arg111 and 139-140 (IR). Active-site charge relay system residues include His176 and Glu178.

Belongs to the glutaminase PdxT/SNO family. In terms of assembly, in the presence of PdxS, forms a dodecamer of heterodimers. Only shows activity in the heterodimer.

It carries out the reaction aldehydo-D-ribose 5-phosphate + D-glyceraldehyde 3-phosphate + L-glutamine = pyridoxal 5'-phosphate + L-glutamate + phosphate + 3 H2O + H(+). The enzyme catalyses L-glutamine + H2O = L-glutamate + NH4(+). Its pathway is cofactor biosynthesis; pyridoxal 5'-phosphate biosynthesis. Its function is as follows. Catalyzes the hydrolysis of glutamine to glutamate and ammonia as part of the biosynthesis of pyridoxal 5'-phosphate. The resulting ammonia molecule is channeled to the active site of PdxS. The sequence is that of Pyridoxal 5'-phosphate synthase subunit PdxT from Pasteurella multocida (strain Pm70).